Here is a 3432-residue protein sequence, read N- to C-terminus: Genome polyprotein (3432 aa).

The interval 2-15 is interaction with host EXOC1; sequence TKKPGGPGKNRAIN. The Cytoplasmic segment spans residues 2 to 109; it reads TKKPGGPGKN…RKQNKRGGNE (108 aa). The hydrophobic; homodimerization of capsid protein C stretch occupies residues 37 to 72; that stretch reads LLDGRGPVRFVLALITFFKFTALAPTKALLGRWKAV. A propeptide spans 106–127 (ER anchor for the capsid protein C, removed in mature form by serine protease NS3); it reads GGNEGSIMWLASLAVVIACAGA. The helical transmembrane segment at 110–130 threads the bilayer; it reads GSIMWLASLAVVIACAGAMKL. The Extracellular portion of the chain corresponds to 131 to 253; sequence SNFQGKLLMT…ATRYLMKTEN (123 aa). N-linked (GlcNAc...) asparagine; by host glycosylation is present at N142. Residues 254-274 traverse the membrane as a helical segment; the sequence is WIIRNPGYAFLAAVLGWMLGS. Over 275–279 the chain is Cytoplasmic; it reads NNGQR. The helical transmembrane segment at 280–294 threads the bilayer; the sequence is VVFTILLLLVAPAYS. The Extracellular segment spans residues 295 to 746; the sequence is FNCLGMGNRD…QVFGGAFRTL (452 aa). 6 disulfide bridges follow: C297/C324, C354/C410, C354/C415, C368/C399, C386/C410, and C386/C415. The interval 392-405 is fusion peptide; the sequence is DRGWGNGCGLFGKG. The N-linked (GlcNAc...) asparagine; by host glycan is linked to N448. Intrachain disulfides connect C484/C581 and C598/C629. A helical membrane pass occupies residues 747–767; it reads FGGMSWITQGLMGALLLWMGV. The Cytoplasmic portion of the chain corresponds to 768 to 773; the sequence is NARDRS. Residues 774 to 794 form a helical membrane-spanning segment; it reads IALAFLATGGVLVFLATNVHA. Topologically, residues 795–1219 are extracellular; that stretch reads DTGCAIDITR…AFAEANSGGD (425 aa). 6 cysteine pairs are disulfide-bonded: C798-C809, C849-C937, C973-C1017, C1074-C1123, C1085-C1106, and C1107-C1110. Residues N924 and N1001 are each glycosylated (N-linked (GlcNAc...) asparagine; by host). The chain crosses the membrane as a helical span at residues 1220–1240; the sequence is VLHLALIAVFKIQPAFLVMNM. Residues 1241-1250 are Cytoplasmic-facing; sequence LSTRWTNQEN. A helical membrane pass occupies residues 1251-1271; sequence VVLVLGAAFFQLASVDLQIGV. Residue H1272 is a topological domain, lumenal. Residues 1273–1293 traverse the membrane as a helical segment; the sequence is GILNAAAIAWMIVRAITFPTT. Topologically, residues 1294–1309 are cytoplasmic; it reads SSVTMPVLALLTPGMR. The chain crosses the membrane as a helical span at residues 1310-1330; that stretch reads ALYLDTYRIILLVIGICSLLH. The Lumenal portion of the chain corresponds to 1331–1341; the sequence is ERKKTMAKKKG. The helical transmembrane segment at 1342-1362 threads the bilayer; the sequence is AVLLGLALTSTGWFSPTTIAA. Residues 1363-1374 are Cytoplasmic-facing; sequence GLMVCNPNKKRG. The helical transmembrane segment at 1375–1395 threads the bilayer; that stretch reads WPATEFLSAVGLMFAIVGGLA. The Lumenal portion of the chain corresponds to 1396-1398; that stretch reads ELD. Residues 1399-1419 form a helical membrane-spanning segment; it reads IESMSIPFMLAGLMAVSYVVS. The Cytoplasmic portion of the chain corresponds to 1420–1476; sequence GKATDMWLERAADISWEMDAAITGSSRRLDVKLDDDGDFHLIDDPGVPWKVWVLRMS. Positions 1427–1466 are interacts with and activates NS3 protease; that stretch reads LERAADISWEMDAAITGSSRRLDVKLDDDGDFHLIDDPGV. An intramembrane region (helical) is located at residues 1477–1497; it reads CIGLAALTPWAIVPAAFGYWL. Residues 1498–2173 are Cytoplasmic-facing; that stretch reads TLKTTKRGGV…RMALEELPDA (676 aa). The 178-residue stretch at 1505–1682 folds into the Peptidase S7 domain; that stretch reads GGVFWDTPSP…DRQEEPVPEA (178 aa). Catalysis depends on charge relay system; for serine protease NS3 activity residues H1555, D1579, and S1639. One can recognise a Helicase ATP-binding domain in the interval 1685-1841; the sequence is PNMLRKRQMT…DSNAPIHDLQ (157 aa). The important for RNA-binding stretch occupies residues 1689 to 1692; it reads RKRQ. 1698–1705 provides a ligand contact to ATP; it reads LHPGSGKT. Positions 1789-1792 match the DEAH box motif; the sequence is DEAH. The region spanning 1852-2017 is the Helicase C-terminal domain; that stretch reads GYEWITEYAG…GLVAQLYGPE (166 aa). K1893 carries the N6-acetyllysine; by host modification. A disordered region spans residues 1950 to 1972; it reads NPSPITSASAAQRRGRVGRNPNQ. Residues 2168-2172 form a regulates the ATPase activity of NS3 helicase region; the sequence is EELPD. Residues 2174 to 2194 traverse the membrane as a helical segment; the sequence is LETITLIVAITVMTGGFFLLM. Topologically, residues 2195–2199 are lumenal; sequence MQRKG. Positions 2200–2220 form an intramembrane region, helical; it reads IGKMGLGALVLTLATFFLWAA. A topological domain (lumenal) is located at residue E2221. A helical transmembrane segment spans residues 2222-2242; sequence VPGTKIAGTLLIALLLMVVLI. Over 2243-2257 the chain is Cytoplasmic; that stretch reads PEPEKQRSQTDNQLA. A helical membrane pass occupies residues 2258 to 2278; it reads VFLICVLTVVGVVAANEYGML. At 2279-2311 the chain is on the lumenal side; the sequence is EKTKADLKSMFGGKTQASGLTGLPSMALDLRPA. The helical intramembrane region spans 2312–2332; sequence TAWALYGGSTVVLTPLLKHLI. The Lumenal portion of the chain corresponds to 2333–2368; sequence TSEYVTTSLASINSQAGSLFVLPRGVPFTDLDLTVG. Residues 2369–2389 form a helical membrane-spanning segment; sequence LVFLGCWGQITLTTFLTAMVL. At 2390–2444 the chain is on the cytoplasmic side; it reads ATLHYGYMLPGWQAEALRAAQRRTAAGIMKNAVVDGMVATDVPELERTTPLMQKK. A helical transmembrane segment spans residues 2445–2465; the sequence is VGQVLLIGVSVAAFLVNPNVT. The Lumenal portion of the chain corresponds to 2466–2469; it reads TVRE. A helical transmembrane segment spans residues 2470–2490; it reads AGVLVTAATLTLWDNGASAVW. Residues 2491 to 3432 are Cytoplasmic-facing; the sequence is NSTTATGLCH…DVLIQEDRVI (942 aa). The region spanning 2528–2793 is the mRNA cap 0-1 NS5-type MT domain; that stretch reads GRPGGRTLGE…DVNLGSGTRA (266 aa). S2583 is an S-adenosyl-L-methionine binding site. S2583 is modified (phosphoserine). The active-site For 2'-O-MTase activity is the K2588. S-adenosyl-L-methionine-binding residues include G2613, W2614, T2631, K2632, D2658, and V2659. The For 2'-O-MTase activity role is filled by D2673. I2674 contacts S-adenosyl-L-methionine. Active-site for 2'-O-MTase activity residues include K2709 and E2745. Y2747 lines the S-adenosyl-L-methionine pocket. Residues E2967, H2971, C2976, and C2979 each coordinate Zn(2+). Residues 3057–3209 enclose the RdRp catalytic domain; it reads GKMYADDTAG…KPLDDRFATA (153 aa). Zn(2+) contacts are provided by H3244, C3260, and C3379.

In the N-terminal section; belongs to the class I-like SAM-binding methyltransferase superfamily. mRNA cap 0-1 NS5-type methyltransferase family. Homodimer. Interacts (via N-terminus) with host EXOC1 (via C-terminus); this interaction results in EXOC1 degradation through the proteasome degradation pathway. As to quaternary structure, forms heterodimers with envelope protein E in the endoplasmic reticulum and Golgi. In terms of assembly, homodimer; in the endoplasmic reticulum and Golgi. Interacts with protein prM. Interacts with non-structural protein 1. Interacts with host HSPA5. Homodimer; Homohexamer when secreted. Interacts with envelope protein E. NS1 interacts with NS4B. Interacts with host complement protein CFH; this interaction leads to the degradation of C3. As to quaternary structure, interacts (via N-terminus) with serine protease NS3. In terms of assembly, forms a heterodimer with serine protease NS3. May form homooligomers. Forms a heterodimer with NS2B. Interacts with non-structural protein 2A (via N-terminus). Interacts with NS4B. Interacts with unphosphorylated RNA-directed RNA polymerase NS5; this interaction stimulates RNA-directed RNA polymerase NS5 guanylyltransferase activity. Interacts with host ILF2. As to quaternary structure, interacts with serine protease NS3. In terms of assembly, homodimer. Interacts with host STAT2; this interaction inhibits the phosphorylation of the latter, and, when all viral proteins are present (polyprotein), targets STAT2 for degradation. Interacts with serine protease NS3. Mn(2+) is required as a cofactor. It depends on Mg(2+) as a cofactor. Post-translationally, specific enzymatic cleavages in vivo yield mature proteins. Cleavages in the lumen of endoplasmic reticulum are performed by host signal peptidase, whereas cleavages in the cytoplasmic side are performed by serine protease NS3. Signal cleavage at the 2K-4B site requires a prior NS3 protease-mediated cleavage at the 4A-2K site. In terms of processing, cleaved in post-Golgi vesicles by a host furin, releasing the mature small envelope protein M, and peptide pr. This cleavage is incomplete as up to 30% of viral particles still carry uncleaved prM. N-glycosylated. Post-translationally, N-glycosylated. The excreted form is glycosylated and this is required for efficient secretion of the protein from infected cells. In terms of processing, acetylated by host KAT5. Acetylation modulates NS3 RNA-binding and unwinding activities and plays an important positive role for viral replication. Phosphorylated on serines residues. This phosphorylation may trigger NS5 nuclear localization.

It is found in the virion. The protein localises to the host nucleus. It localises to the host cytoplasm. The protein resides in the host perinuclear region. Its subcellular location is the secreted. It is found in the virion membrane. The protein localises to the host endoplasmic reticulum membrane. It localises to the host cell surface. The enzyme catalyses Selective hydrolysis of -Xaa-Xaa-|-Yaa- bonds in which each of the Xaa can be either Arg or Lys and Yaa can be either Ser or Ala.. It catalyses the reaction RNA(n) + a ribonucleoside 5'-triphosphate = RNA(n+1) + diphosphate. The catalysed reaction is a ribonucleoside 5'-triphosphate + H2O = a ribonucleoside 5'-diphosphate + phosphate + H(+). It carries out the reaction ATP + H2O = ADP + phosphate + H(+). The enzyme catalyses a 5'-end (5'-triphosphoguanosine)-ribonucleoside in mRNA + S-adenosyl-L-methionine = a 5'-end (N(7)-methyl 5'-triphosphoguanosine)-ribonucleoside in mRNA + S-adenosyl-L-homocysteine. It catalyses the reaction a 5'-end (N(7)-methyl 5'-triphosphoguanosine)-ribonucleoside in mRNA + S-adenosyl-L-methionine = a 5'-end (N(7)-methyl 5'-triphosphoguanosine)-(2'-O-methyl-ribonucleoside) in mRNA + S-adenosyl-L-homocysteine + H(+). Plays a role in virus budding by binding to the cell membrane and gathering the viral RNA into a nucleocapsid that forms the core of a mature virus particle. During virus entry, may induce genome penetration into the host cytoplasm after hemifusion induced by the surface proteins. Can migrate to the cell nucleus where it modulates host functions. Overcomes the anti-viral effects of host EXOC1 by sequestering and degrading the latter through the proteasome degradation pathway. In terms of biological role, inhibits RNA silencing by interfering with host Dicer. Its function is as follows. Prevents premature fusion activity of envelope proteins in trans-Golgi by binding to envelope protein E at pH6.0. After virion release in extracellular space, gets dissociated from E dimers. Functionally, acts as a chaperone for envelope protein E during intracellular virion assembly by masking and inactivating envelope protein E fusion peptide. prM is the only viral peptide matured by host furin in the trans-Golgi network probably to avoid catastrophic activation of the viral fusion activity in acidic Golgi compartment prior to virion release. prM-E cleavage is inefficient, and many virions are only partially matured. These uncleaved prM would play a role in immune evasion. May play a role in virus budding. Exerts cytotoxic effects by activating a mitochondrial apoptotic pathway through M ectodomain. May display a viroporin activity. In terms of biological role, binds to host cell surface receptor and mediates fusion between viral and cellular membranes. Efficient virus attachment to cell is, at least in part, mediated by host HSPA5. Envelope protein is synthesized in the endoplasmic reticulum in the form of heterodimer with protein prM. They play a role in virion budding in the ER, and the newly formed immature particle is covered with 60 spikes composed of heterodimer between precursor prM and envelope protein E. The virion is transported to the Golgi apparatus where the low pH causes dissociation of PrM-E heterodimers and formation of E homodimers. prM-E cleavage is inefficient, and many virions are only partially matured. These uncleaved prM would play a role in immune evasion. Its function is as follows. Involved in immune evasion, pathogenesis and viral replication. Once cleaved off the polyprotein, is targeted to three destinations: the viral replication cycle, the plasma membrane and the extracellular compartment. Essential for viral replication. Required for formation of the replication complex and recruitment of other non-structural proteins to the ER-derived membrane structures. Excreted as a hexameric lipoparticle that plays a role against host immune response. Antagonizing the complement function. Binds to the host macrophages and dendritic cells. Inhibits signal transduction originating from Toll-like receptor 3 (TLR3). Functionally, component of the viral RNA replication complex that functions in virion assembly and antagonizes the host alpha/beta interferon antiviral response. Required cofactor for the serine protease function of NS3. May have membrane-destabilizing activity and form viroporins. In terms of biological role, displays three enzymatic activities: serine protease, NTPase and RNA helicase. NS3 serine protease, in association with NS2B, performs its autocleavage and cleaves the polyprotein at dibasic sites in the cytoplasm: C-prM, NS2A-NS2B, NS2B-NS3, NS3-NS4A, NS4A-2K and NS4B-NS5. NS3 RNA helicase binds RNA and unwinds dsRNA in the 3' to 5' direction. Its function is as follows. Regulates the ATPase activity of the NS3 helicase activity. NS4A allows NS3 helicase to conserve energy during unwinding. Functionally, functions as a signal peptide for NS4B and is required for the interferon antagonism activity of the latter. Induces the formation of ER-derived membrane vesicles where the viral replication takes place. Inhibits interferon (IFN)-induced host STAT1 phosphorylation and nuclear translocation, thereby preventing the establishment of cellular antiviral state by blocking the IFN-alpha/beta pathway. Inhibits STAT2 translocation in the nucleus after IFN-alpha treatment. In terms of biological role, replicates the viral (+) and (-) RNA genome. Performs the capping of genomes in the cytoplasm. NS5 methylates viral RNA cap at guanine N-7 and ribose 2'-O positions. Besides its role in RNA genome replication, also prevents the establishment of cellular antiviral state by blocking the interferon-alpha/beta (IFN-alpha/beta) signaling pathway. Inhibits host TYK2 and STAT2 phosphorylation, thereby preventing activation of JAK-STAT signaling pathway. The sequence is that of Genome polyprotein from Ardeidae (herons).